A 419-amino-acid chain; its full sequence is Creatine kinase S-type, mitochondrial (419 aa).

The N-terminal 39 residues, 1–39 (MASTFSKLLTGRNASLLFATLGTGALTTGYLLNKQNVCA), are a transit peptide targeting the mitochondrion. Residues 40-64 (AAREQHKLFPPSADYPDLRKHNNCM) form a cardiolipin-binding region. Residues 46-132 (KLFPPSADYP…FDPVIKLRHN (87 aa)) enclose the Phosphagen kinase N-terminal domain. Residues 159-401 (YVLSSRVRTG…NYLVDCEKKL (243 aa)) enclose the Phosphagen kinase C-terminal domain. Residues 162–166 (SSRVR) and H225 contribute to the ATP site. Position 255 is a phosphotyrosine (Y255). Residues R270, R326, 354–359 (RGTGGV), and D369 each bind ATP. At T356 the chain carries Phosphothreonine.

The protein belongs to the ATP:guanido phosphotransferase family. As to quaternary structure, exists as an octamer composed of four CKMT2 homodimers.

Its subcellular location is the mitochondrion inner membrane. It carries out the reaction creatine + ATP = N-phosphocreatine + ADP + H(+). Functionally, reversibly catalyzes the transfer of phosphate between ATP and various phosphogens (e.g. creatine phosphate). Creatine kinase isoenzymes play a central role in energy transduction in tissues with large, fluctuating energy demands, such as skeletal muscle, heart, brain and spermatozoa. The polypeptide is Creatine kinase S-type, mitochondrial (CKMT2) (Bos taurus (Bovine)).